Reading from the N-terminus, the 314-residue chain is Olfactory receptor 1E2 (314 aa).

Residues 1-25 are Extracellular-facing; it reads MMGQNQTSISDFLLLGLPIQPEQQN. A glycan (N-linked (GlcNAc...) asparagine) is linked at Asn-5. A helical membrane pass occupies residues 26–49; the sequence is LCYALFLAMYLTTLLGNLLIIVLI. The Cytoplasmic segment spans residues 50 to 57; the sequence is RLDSHLHT. Residues 58 to 79 form a helical membrane-spanning segment; the sequence is PMYLFLSNLSFSDLCFSSVTIP. Over 80–100 the chain is Extracellular; sequence KLLQNMQNQDPSIPYADCLTQ. Cysteines 97 and 189 form a disulfide. A helical transmembrane segment spans residues 101 to 120; sequence MYFFLLFGDLESFLLVAMAY. The Cytoplasmic portion of the chain corresponds to 121–139; sequence DRYVAICFPLHYTAIMSPM. The helical transmembrane segment at 140–158 threads the bilayer; that stretch reads LCLSLVALSWVLTTFHAML. Topologically, residues 159–195 are extracellular; the sequence is HTLLMARLCFCADNVIPHFFCDMSALLKLACSDTRVN. A helical membrane pass occupies residues 196–219; sequence EWVIFIMGGLIVVIPFLLILGSYA. The Cytoplasmic portion of the chain corresponds to 220-236; it reads RIVSSILKVPSSKGICK. The helical transmembrane segment at 237-259 threads the bilayer; sequence AFSTCGSHLSVVSLFYGTIIGLY. At 260 to 272 the chain is on the extracellular side; sequence LCPSANSSTLKET. Asn-265 carries an N-linked (GlcNAc...) asparagine glycan. The helical transmembrane segment at 273–292 threads the bilayer; the sequence is VMAMMYTVVTPMLNPFIYSL. At 293 to 314 the chain is on the cytoplasmic side; sequence RNRDMKGALERVICKRKNPFLL.

This sequence belongs to the G-protein coupled receptor 1 family.

It localises to the cell membrane. Its function is as follows. Odorant receptor. This chain is Olfactory receptor 1E2 (OR1E2), found in Gorilla gorilla gorilla (Western lowland gorilla).